The sequence spans 339 residues: Ketol-acid reductoisomerase (NADP(+)) (339 aa).

One can recognise a KARI N-terminal Rossmann domain in the interval 1–182; sequence MRVYYDRDAD…GGGRAGIIET (182 aa). NADP(+) is bound by residues 24–27, arginine 48, serine 51, serine 53, and 83–86; these read YGSQ and DELQ. Histidine 108 is an active-site residue. Residue glycine 134 participates in NADP(+) binding. Residues 183-328 enclose the KARI C-terminal knotted domain; the sequence is TFREECETDL…AKLRDMMPWI (146 aa). 4 residues coordinate Mg(2+): aspartate 191, glutamate 195, glutamate 227, and glutamate 231. Serine 252 contributes to the substrate binding site.

The protein belongs to the ketol-acid reductoisomerase family. Requires Mg(2+) as cofactor.

The enzyme catalyses (2R)-2,3-dihydroxy-3-methylbutanoate + NADP(+) = (2S)-2-acetolactate + NADPH + H(+). The catalysed reaction is (2R,3R)-2,3-dihydroxy-3-methylpentanoate + NADP(+) = (S)-2-ethyl-2-hydroxy-3-oxobutanoate + NADPH + H(+). It participates in amino-acid biosynthesis; L-isoleucine biosynthesis; L-isoleucine from 2-oxobutanoate: step 2/4. It functions in the pathway amino-acid biosynthesis; L-valine biosynthesis; L-valine from pyruvate: step 2/4. Functionally, involved in the biosynthesis of branched-chain amino acids (BCAA). Catalyzes an alkyl-migration followed by a ketol-acid reduction of (S)-2-acetolactate (S2AL) to yield (R)-2,3-dihydroxy-isovalerate. In the isomerase reaction, S2AL is rearranged via a Mg-dependent methyl migration to produce 3-hydroxy-3-methyl-2-ketobutyrate (HMKB). In the reductase reaction, this 2-ketoacid undergoes a metal-dependent reduction by NADPH to yield (R)-2,3-dihydroxy-isovalerate. The sequence is that of Ketol-acid reductoisomerase (NADP(+)) from Rhodopseudomonas palustris (strain BisB18).